Here is a 337-residue protein sequence, read N- to C-terminus: tRNA N6-adenosine threonylcarbamoyltransferase (337 aa).

Residues histidine 114 and histidine 118 each contribute to the Fe cation site. Substrate is bound by residues 136 to 140, aspartate 169, glycine 182, aspartate 186, and asparagine 275; that span reads LVSGG. Residue aspartate 301 coordinates Fe cation.

It belongs to the KAE1 / TsaD family. Fe(2+) serves as cofactor.

The protein resides in the cytoplasm. It carries out the reaction L-threonylcarbamoyladenylate + adenosine(37) in tRNA = N(6)-L-threonylcarbamoyladenosine(37) in tRNA + AMP + H(+). Functionally, required for the formation of a threonylcarbamoyl group on adenosine at position 37 (t(6)A37) in tRNAs that read codons beginning with adenine. Is involved in the transfer of the threonylcarbamoyl moiety of threonylcarbamoyl-AMP (TC-AMP) to the N6 group of A37, together with TsaE and TsaB. TsaD likely plays a direct catalytic role in this reaction. The polypeptide is tRNA N6-adenosine threonylcarbamoyltransferase (Streptococcus uberis (strain ATCC BAA-854 / 0140J)).